The chain runs to 749 residues: Basic juvenile hormone-suppressible protein 2 (749 aa).

An N-terminal signal peptide occupies residues 1–14; the sequence is MRAVLLFVVSLAAL.

Belongs to the hemocyanin family. As to expression, fat body, and hemolymph of larvae.

The sequence is that of Basic juvenile hormone-suppressible protein 2 (BJSP-2) from Trichoplusia ni (Cabbage looper).